The following is a 183-amino-acid chain: Putative 3-methyladenine DNA glycosylase (183 aa).

This sequence belongs to the DNA glycosylase MPG family.

The chain is Putative 3-methyladenine DNA glycosylase from Legionella pneumophila (strain Corby).